The sequence spans 374 residues: Queuine tRNA-ribosyltransferase (374 aa).

The active-site Proton acceptor is the Asp89. Substrate is bound by residues 89-93 (DSGGF), Asp143, Gln185, and Gly212. The interval 243–249 (GVGKPED) is RNA binding. The Nucleophile role is filled by Asp262. Residues 267-271 (TRNAR) are RNA binding; important for wobble base 34 recognition. Positions 300, 302, 305, and 331 each coordinate Zn(2+).

The protein belongs to the queuine tRNA-ribosyltransferase family. Homodimer. Within each dimer, one monomer is responsible for RNA recognition and catalysis, while the other monomer binds to the replacement base PreQ1. Zn(2+) is required as a cofactor.

It carries out the reaction 7-aminomethyl-7-carbaguanine + guanosine(34) in tRNA = 7-aminomethyl-7-carbaguanosine(34) in tRNA + guanine. The protein operates within tRNA modification; tRNA-queuosine biosynthesis. Its function is as follows. Catalyzes the base-exchange of a guanine (G) residue with the queuine precursor 7-aminomethyl-7-deazaguanine (PreQ1) at position 34 (anticodon wobble position) in tRNAs with GU(N) anticodons (tRNA-Asp, -Asn, -His and -Tyr). Catalysis occurs through a double-displacement mechanism. The nucleophile active site attacks the C1' of nucleotide 34 to detach the guanine base from the RNA, forming a covalent enzyme-RNA intermediate. The proton acceptor active site deprotonates the incoming PreQ1, allowing a nucleophilic attack on the C1' of the ribose to form the product. After dissociation, two additional enzymatic reactions on the tRNA convert PreQ1 to queuine (Q), resulting in the hypermodified nucleoside queuosine (7-(((4,5-cis-dihydroxy-2-cyclopenten-1-yl)amino)methyl)-7-deazaguanosine). This Saccharophagus degradans (strain 2-40 / ATCC 43961 / DSM 17024) protein is Queuine tRNA-ribosyltransferase.